We begin with the raw amino-acid sequence, 478 residues long: DNA gyrase subunit B (478 aa).

The Toprim domain maps to 319–438; it reads CEIYLVEGDS…GGHVYIAQPP (120 aa). Positions 325, 403, and 405 each coordinate Mg(2+).

It belongs to the type II topoisomerase GyrB family. As to quaternary structure, heterotetramer, composed of two GyrA and two GyrB chains. In the heterotetramer, GyrA contains the active site tyrosine that forms a transient covalent intermediate with DNA, while GyrB binds cofactors and catalyzes ATP hydrolysis. The cofactor is Mg(2+). Mn(2+) is required as a cofactor. Requires Ca(2+) as cofactor.

Its subcellular location is the cytoplasm. The catalysed reaction is ATP-dependent breakage, passage and rejoining of double-stranded DNA.. In terms of biological role, a type II topoisomerase that negatively supercoils closed circular double-stranded (ds) DNA in an ATP-dependent manner to modulate DNA topology and maintain chromosomes in an underwound state. Negative supercoiling favors strand separation, and DNA replication, transcription, recombination and repair, all of which involve strand separation. Also able to catalyze the interconversion of other topological isomers of dsDNA rings, including catenanes and knotted rings. Type II topoisomerases break and join 2 DNA strands simultaneously in an ATP-dependent manner. The chain is DNA gyrase subunit B (gyrB) from Cytophaga aurantiaca.